Reading from the N-terminus, the 464-residue chain is Maturase K (464 aa).

Belongs to the intron maturase 2 family. MatK subfamily.

The protein resides in the plastid. It localises to the chloroplast. In terms of biological role, usually encoded in the trnK tRNA gene intron. Probably assists in splicing its own and other chloroplast group II introns. This Castanea crenata (Japanese chestnut) protein is Maturase K.